The sequence spans 318 residues: Transaldolase (318 aa).

Lys132 (schiff-base intermediate with substrate) is an active-site residue.

Belongs to the transaldolase family. Type 1 subfamily. In terms of assembly, homodimer.

It localises to the cytoplasm. It catalyses the reaction D-sedoheptulose 7-phosphate + D-glyceraldehyde 3-phosphate = D-erythrose 4-phosphate + beta-D-fructose 6-phosphate. Its pathway is carbohydrate degradation; pentose phosphate pathway; D-glyceraldehyde 3-phosphate and beta-D-fructose 6-phosphate from D-ribose 5-phosphate and D-xylulose 5-phosphate (non-oxidative stage): step 2/3. Its function is as follows. Transaldolase is important for the balance of metabolites in the pentose-phosphate pathway. The chain is Transaldolase from Shewanella sediminis (strain HAW-EB3).